The primary structure comprises 317 residues: sn-1-specific diacylglycerol lipase ABHD11 (317 aa).

The transit peptide at 1-20 (MSNFAMSALCRVFTRGAPCG) directs the protein to the mitochondrion. The 236-residue stretch at 69–304 (PLVFLHGLFG…ASHWIHADKP (236 aa)) folds into the AB hydrolase-1 domain. Residues serine 142, glutamate 238, and histidine 297 each act as charge relay system in the active site.

The protein belongs to the AB hydrolase superfamily. Phosphorylated.

The protein resides in the mitochondrion. It is found in the mitochondrion matrix. The enzyme catalyses 1-octadecanoyl-2-(5Z,8Z,11Z,14Z-eicosatetraenoyl)-sn-glycerol + H2O = 2-(5Z,8Z,11Z,14Z-eicosatetraenoyl)-glycerol + octadecanoate + H(+). The catalysed reaction is a 1,2-diacyl-sn-glycerol + H2O = a 2-acylglycerol + a fatty acid + H(+). It catalyses the reaction a 1,3-diacyl-sn-glycerol + H2O = a 1-acyl-sn-glycerol + a fatty acid + H(+). It carries out the reaction 1-octadecanoyl-2-(9Z-octadecenoyl)-sn-glycerol + H2O = 2-(9Z-octadecenoyl)-glycerol + octadecanoate + H(+). The enzyme catalyses 1-octadecanoyl-2-(4Z,7Z,10Z,13Z,16Z,19Z-docosahexaenoyl)-sn-glycerol + H2O = 2-(4Z,7Z,10Z,13Z,16Z,19Z-docosahexaenoyl)-glycerol + octadecanoate + H(+). The catalysed reaction is 1,2-didecanoylglycerol + H2O = decanoylglycerol + decanoate + H(+). In terms of biological role, catalyzes the hydrolysis of diacylglycerol in vitro and may function as a key regulator in lipid metabolism, namely by regulating the intracellular levels of diacylglycerol. 1,2-diacyl-sn-glycerols are the preferred substrate over 1,3-diacyl-sn-glycerols. The enzyme hydrolyzes stearate in preference to palmitate from the sn-1 position of 1,2-diacyl-sn-glycerols. The polypeptide is sn-1-specific diacylglycerol lipase ABHD11 (Danio rerio (Zebrafish)).